Reading from the N-terminus, the 307-residue chain is MDSDSHNTLQTVNTFLTHLASERRLSPHTVNGYQRDLIEARTLLGSQPWDTLTVHDMRSLAASLHRQGKSGKTIQRMLSTLRTFFRYLMREGLARDNPAIDIRAPKSGKRLPKALDVDQVSHLLDAGTSNSEPLALRDQAIMELLYACGLRLAELLSLNLDSIDLHESQLLVTGKGNKTRQLPVGKPALTAVRRWLQVRPMLIKSSDQNALFISKNGRRLSPSSVQQRLKRHALERGLDAHLHPHKLRHSFATHLLESSGDLRAVQELLGHADLATTQVYTHLDFQHLAQVYDGAHPRAQRRKDDDE.

Residues 6 to 89 enclose the Core-binding (CB) domain; it reads HNTLQTVNTF…TLRTFFRYLM (84 aa). The 184-residue stretch at 110–293 folds into the Tyr recombinase domain; the sequence is RLPKALDVDQ…DFQHLAQVYD (184 aa). Catalysis depends on residues R151, K175, H245, R248, and H271. The active-site O-(3'-phospho-DNA)-tyrosine intermediate is the Y280.

The protein belongs to the 'phage' integrase family. XerC subfamily. As to quaternary structure, forms a cyclic heterotetrameric complex composed of two molecules of XerC and two molecules of XerD.

The protein localises to the cytoplasm. Site-specific tyrosine recombinase, which acts by catalyzing the cutting and rejoining of the recombining DNA molecules. The XerC-XerD complex is essential to convert dimers of the bacterial chromosome into monomers to permit their segregation at cell division. It also contributes to the segregational stability of plasmids. This is Tyrosine recombinase XerC from Alcanivorax borkumensis (strain ATCC 700651 / DSM 11573 / NCIMB 13689 / SK2).